The chain runs to 603 residues: UPF0313 protein MJ1155 (603 aa).

The 273-residue stretch at 285 to 557 (GIVPVQFSVV…KIQKAICLYR (273 aa)) folds into the Radical SAM core domain. Residues C299, C303, and C306 each contribute to the [4Fe-4S] cluster site.

Belongs to the UPF0313 family. The cofactor is [4Fe-4S] cluster.

The chain is UPF0313 protein MJ1155 from Methanocaldococcus jannaschii (strain ATCC 43067 / DSM 2661 / JAL-1 / JCM 10045 / NBRC 100440) (Methanococcus jannaschii).